Reading from the N-terminus, the 227-residue chain is MGLSFNGENMIIFGLFGKTGCGKTEILNELKKHHPVIDIEEIARTRGSILGDLYHLSMRSQEEFDYLINKEIEKAKKFGYAVVEYEGRKIGGEKKLKIPELLADIKNYTYKILIDCPYECQINRLVSIYKPKNEKEKEILINKFLILKESFKKPEMIEAVDNIIELIKQDKYYEAAKLIEEKLYREHYMRNVKKIKPDLIVYNEDVKKSAKIIDEFIKKKLKEHNLI.

17-24 (GKTGCGKT) contacts ATP.

This is an uncharacterized protein from Methanocaldococcus jannaschii (strain ATCC 43067 / DSM 2661 / JAL-1 / JCM 10045 / NBRC 100440) (Methanococcus jannaschii).